Here is a 1097-residue protein sequence, read N- to C-terminus: U3 small nucleolar RNA-associated protein 22 (1097 aa).

2 stretches are compositionally biased toward basic and acidic residues: residues 1 to 10 (MNGLKREHES) and 18 to 27 (KTPETEYDSH). Residues 1–27 (MNGLKREHESSSSQDGSKTPETEYDSH) form a disordered region.

It belongs to the NRAP family. Component of the ribosomal small subunit (SSU) processome.

It is found in the nucleus. The protein localises to the nucleolus. Functionally, involved in nucleolar processing of pre-18S ribosomal RNA and ribosome assembly. The polypeptide is U3 small nucleolar RNA-associated protein 22 (Schizosaccharomyces pombe (strain 972 / ATCC 24843) (Fission yeast)).